We begin with the raw amino-acid sequence, 326 residues long: Pyruvate dehydrogenase E1 component subunit alpha (326 aa).

In terms of assembly, heterodimer of an alpha and a beta chain. Thiamine diphosphate serves as cofactor.

The enzyme catalyses N(6)-[(R)-lipoyl]-L-lysyl-[protein] + pyruvate + H(+) = N(6)-[(R)-S(8)-acetyldihydrolipoyl]-L-lysyl-[protein] + CO2. In terms of biological role, the pyruvate dehydrogenase complex catalyzes the overall conversion of pyruvate to acetyl-CoA and CO(2). It contains multiple copies of three enzymatic components: pyruvate dehydrogenase (E1), dihydrolipoamide acetyltransferase (E2) and lipoamide dehydrogenase (E3). The sequence is that of Pyruvate dehydrogenase E1 component subunit alpha (pdhA) from Rickettsia prowazekii (strain Madrid E).